The chain runs to 187 residues: GTP cyclohydrolase 1 (187 aa).

Zn(2+) is bound by residues Cys-76, His-79, and Cys-148.

Belongs to the GTP cyclohydrolase I family. As to quaternary structure, homomer.

The enzyme catalyses GTP + H2O = 7,8-dihydroneopterin 3'-triphosphate + formate + H(+). It participates in cofactor biosynthesis; 7,8-dihydroneopterin triphosphate biosynthesis; 7,8-dihydroneopterin triphosphate from GTP: step 1/1. The sequence is that of GTP cyclohydrolase 1 from Desulforamulus reducens (strain ATCC BAA-1160 / DSM 100696 / MI-1) (Desulfotomaculum reducens).